The following is a 296-amino-acid chain: DNA primase small subunit PriS (296 aa).

Catalysis depends on residues D82, D84, and D191.

It belongs to the eukaryotic-type primase small subunit family. In terms of assembly, heterodimer of a small subunit (PriS) and a large subunit (PriL). The cofactor is Mg(2+). Mn(2+) is required as a cofactor.

Functionally, catalytic subunit of DNA primase, an RNA polymerase that catalyzes the synthesis of short RNA molecules used as primers for DNA polymerase during DNA replication. The small subunit contains the primase catalytic core and has DNA synthesis activity on its own. Binding to the large subunit stabilizes and modulates the activity, increasing the rate of DNA synthesis while decreasing the length of the DNA fragments, and conferring RNA synthesis capability. The DNA polymerase activity may enable DNA primase to also catalyze primer extension after primer synthesis. May also play a role in DNA repair. This is DNA primase small subunit PriS from Methanopyrus kandleri (strain AV19 / DSM 6324 / JCM 9639 / NBRC 100938).